The primary structure comprises 521 residues: Protein DML1 (521 aa).

This sequence belongs to the misato family.

The protein localises to the mitochondrion. In terms of biological role, involved in the partitioning of the mitochondrial organelle and mitochondrial DNA (mtDNA) inheritance. The sequence is that of Protein DML1 (DML1) from Phaeosphaeria nodorum (strain SN15 / ATCC MYA-4574 / FGSC 10173) (Glume blotch fungus).